We begin with the raw amino-acid sequence, 579 residues long: uncharacterized protein (579 aa).

This is an uncharacterized protein from Klebsiella pneumoniae.